The following is a 329-amino-acid chain: VSG expression site-associated protein 221A (329 aa).

The first 23 residues, 1-23 (MKVEIVELVVLLFSVTCVDAWLQ), serve as a signal peptide directing secretion. Residues Asn-73, Asn-294, and Asn-308 are each glycosylated (N-linked (GlcNAc...) asparagine).

Functionally, not known but may be related to activation of the variant surface glycoprotein genes. The polypeptide is VSG expression site-associated protein 221A (Trypanosoma brucei brucei).